A 303-amino-acid polypeptide reads, in one-letter code: Sulfotransferase 6B1 (303 aa).

65–70 (KCGSNW) provides a ligand contact to 3'-phosphoadenylyl sulfate. Catalysis depends on His118, which acts as the Proton acceptor. 3'-phosphoadenylyl sulfate is bound by residues Arg140, Ser148, Tyr203, 237–242 (STFLAM), and 259–261 (RKG).

It belongs to the sulfotransferase 1 family. In terms of tissue distribution, expressed in brain, heart, kidney, thymus, lung, liver and testis.

The protein localises to the cytoplasm. It localises to the cytosol. The catalysed reaction is thyroxine + 3'-phosphoadenylyl sulfate = thyroxine sulfate + adenosine 3',5'-bisphosphate + H(+). In terms of biological role, sulfotransferase that utilizes 3'-phospho-5'-adenylyl sulfate (PAPS) as sulfonate donor to catalyze the sulfate conjugation of thyroxine. Involved in the metabolism of thyroxine. In Mus musculus (Mouse), this protein is Sulfotransferase 6B1 (Sult6b1).